The chain runs to 153 residues: uncharacterized protein (153 aa).

A signal peptide spans 1-18; the sequence is MSARISKQLRLSVPPCLA. Asparagine 19 and asparagine 25 each carry an N-linked (GlcNAc...) asparagine glycan. Residues 19–43 lie on the Extracellular side of the membrane; it reads NRTTASNSSSCVTEVEPLLQSFSST. A helical transmembrane segment spans residues 44–64; that stretch reads LVLIVLATVIFCLVVLSLSTF. The Cytoplasmic portion of the chain corresponds to 65 to 153; it reads HMHKSKMKKR…EHLQQSVVLS (89 aa). The segment at 75 to 115 is disordered; it reads KIEKAQEEYERDHCSPKAERGHLHGMGRGGTHGSPTSPTIQ. The span at 77–96 shows a compositional bias: basic and acidic residues; that stretch reads EKAQEEYERDHCSPKAERGH.

The protein resides in the membrane. This is an uncharacterized protein from Xenopus tropicalis (Western clawed frog).